The sequence spans 756 residues: Serine/threonine-protein kinase tousled-like 1-B (756 aa).

Composition is skewed to low complexity over residues 1–12 (MSVQSNSNSSGS) and 23–34 (STGSPTPGSVSP). Disordered stretches follow at residues 1-56 (MSVQ…LDPR) and 69-185 (VSGN…QNSS). Over residues 45 to 56 (EGMDELHSLDPR) the composition is skewed to basic and acidic residues. Residues 72–85 (NTGGSTGSASGGPK) are compositionally biased toward gly residues. The segment covering 93-103 (SSHSFGSLGSS) has biased composition (low complexity). Over residues 104 to 120 (SDKESETPEKKHFESSR) the composition is skewed to basic and acidic residues. A coiled-coil region spans residues 243-268 (DLRRQIDEQQKLLERFKERLNKCTTM). A disordered region spans residues 339 to 375 (KLLAKRKPSSTPSSQSPTPNESKQRKTKAVNGADNDP). Low complexity predominate over residues 347 to 357 (SSTPSSQSPTP). The stretch at 397-435 (FKLRLGHLKKEEAEIQAELERLERVRNLHIRELKRINNE) forms a coiled coil. The region spanning 450–728 (YLLLHLLGRG…VHQLGSDSYL (279 aa)) is the Protein kinase domain. Residues 456-464 (LGRGGFSEV) and K479 contribute to the ATP site. The active-site Proton acceptor is D580. The disordered stretch occupies residues 734 to 756 (RSNSSGNLQATPASPAPSGIISY). Positions 735-745 (SNSSGNLQATP) are enriched in polar residues.

Belongs to the protein kinase superfamily. Ser/Thr protein kinase family. Requires Mg(2+) as cofactor.

It is found in the nucleus. The enzyme catalyses L-seryl-[protein] + ATP = O-phospho-L-seryl-[protein] + ADP + H(+). The catalysed reaction is L-threonyl-[protein] + ATP = O-phospho-L-threonyl-[protein] + ADP + H(+). This Danio rerio (Zebrafish) protein is Serine/threonine-protein kinase tousled-like 1-B (tlk1b).